Here is a 155-residue protein sequence, read N- to C-terminus: MSRRGTAKEKTAKSDPIYRNRLVNMLVNRILKHGKKSLAYQIIYRAMKKIQQKTETNPLSVLRQAIRGVTPDIAVKARRVGGSTHQVPIEIGSTQGKALAIRWLLAASRKRPGRNMAFKLSSELVDAAKGSGEAIRKKEXTHRMAEANRAFAHFR.

It belongs to the universal ribosomal protein uS7 family. In terms of assembly, part of the 30S ribosomal subunit.

The protein resides in the plastid. It is found in the chloroplast. In terms of biological role, one of the primary rRNA binding proteins, it binds directly to 16S rRNA where it nucleates assembly of the head domain of the 30S subunit. In Stewartia pseudocamellia (Japanese stewartia), this protein is Small ribosomal subunit protein uS7c (rps7).